Consider the following 248-residue polypeptide: Protein GrpE (248 aa).

The interval 229 to 248 is disordered; the sequence is AAPKEDTLPAQENQSSPADS. The span at 238 to 248 shows a compositional bias: polar residues; that stretch reads AQENQSSPADS.

This sequence belongs to the GrpE family. Homodimer.

The protein localises to the cytoplasm. Its function is as follows. Participates actively in the response to hyperosmotic and heat shock by preventing the aggregation of stress-denatured proteins, in association with DnaK and GrpE. It is the nucleotide exchange factor for DnaK and may function as a thermosensor. Unfolded proteins bind initially to DnaJ; upon interaction with the DnaJ-bound protein, DnaK hydrolyzes its bound ATP, resulting in the formation of a stable complex. GrpE releases ADP from DnaK; ATP binding to DnaK triggers the release of the substrate protein, thus completing the reaction cycle. Several rounds of ATP-dependent interactions between DnaJ, DnaK and GrpE are required for fully efficient folding. This Trichormus variabilis (strain ATCC 29413 / PCC 7937) (Anabaena variabilis) protein is Protein GrpE.